The chain runs to 481 residues: Heat stress transcription factor A-1b (481 aa).

Over residues 1 to 16 (MESVPESVPSPNSNTP) the composition is skewed to low complexity. A disordered region spans residues 1–23 (MESVPESVPSPNSNTPSIPPPVN). A DNA-binding region spans residues 25-119 (VPPFLSKTYD…LLKSIVRRKP (95 aa)). A hydrophobic repeat HR-A/B region spans residues 138–204 (ACVEVGKFGI…QMMSFLAKAV (67 aa)). Over residues 213 to 227 (LVQQNNNDGNRQIPG) the composition is skewed to polar residues. Residues 213–244 (LVQQNNNDGNRQIPGSNKKRRLPVDEQENRGD) are disordered. Residues 229-233 (NKKRR) carry the Nuclear localization signal motif. Basic and acidic residues predominate over residues 234 to 243 (LPVDEQENRG). The short motif at 418-427 (DPFWEQFFSV) is the AHA element. Residues 467–474 (LTEQMGLL) carry the Nuclear export signal motif.

This sequence belongs to the HSF family. Class A subfamily. Homotrimer. Binds to HSBP. Post-translationally, exhibits temperature-dependent phosphorylation.

The protein localises to the cytoplasm. Its subcellular location is the nucleus. Transcriptional activator that specifically binds DNA sequence 5'-AGAAnnTTCT-3' known as heat shock promoter elements (HSE). This is Heat stress transcription factor A-1b (HSFA1B) from Arabidopsis thaliana (Mouse-ear cress).